A 257-amino-acid polypeptide reads, in one-letter code: Acetylglutamate kinase (257 aa).

Residues 43-44 (GG), Arg65, and Asn157 contribute to the substrate site. ATP is bound by residues 180–185 (DVSGIL) and 208–210 (IIT).

This sequence belongs to the acetylglutamate kinase family. ArgB subfamily. Homodimer.

It is found in the cytoplasm. The enzyme catalyses N-acetyl-L-glutamate + ATP = N-acetyl-L-glutamyl 5-phosphate + ADP. Its pathway is amino-acid biosynthesis; L-arginine biosynthesis; N(2)-acetyl-L-ornithine from L-glutamate: step 2/4. Its function is as follows. Catalyzes the ATP-dependent phosphorylation of N-acetyl-L-glutamate. This Pectobacterium atrosepticum (strain SCRI 1043 / ATCC BAA-672) (Erwinia carotovora subsp. atroseptica) protein is Acetylglutamate kinase.